We begin with the raw amino-acid sequence, 1679 residues long: Furin-like protease 2 (1679 aa).

Over residues 1–10 the composition is skewed to polar residues; that stretch reads MSNTTRSSRV. The interval 1-42 is disordered; the sequence is MSNTTRSSRVTIGRIGTTPQITDPWSSGLEKQRPSRCGGPKS. N-linked (GlcNAc...) asparagine glycosylation is found at N3, N109, and N130. The disordered stretch occupies residues 139–164; it reads VSSLHSSRRTNPPSSSSSSSSNVDVD. A compositionally biased stretch (low complexity) spans 147 to 160; that stretch reads RTNPPSSSSSSSSN. N205 carries an N-linked (GlcNAc...) asparagine glycan. The region spanning 383–705 is the Peptidase S8 domain; sequence QWYLNGGAKD…YGLMDAGAMV (323 aa). D417 acts as the Charge relay system in catalysis. The segment at 424–456 is disordered; that stretch reads HPDLAQNYDPEASFDINGNDSDPTPQDNGDNKH. The span at 439–451 shows a compositional bias: polar residues; that stretch reads INGNDSDPTPQDN. N-linked (GlcNAc...) asparagine glycosylation is present at N442. Catalysis depends on H456, which acts as the Charge relay system. Disulfide bonds link C473/C629 and C565/C595. N-linked (GlcNAc...) asparagine glycosylation is present at N480. S637 functions as the Charge relay system in the catalytic mechanism. The region spanning 714-852 is the P/Homo B domain; the sequence is VPPQHICKSR…QLIFYGTSTQ (139 aa). C720 and C748 form a disulfide bridge. Residue N927 is glycosylated (N-linked (GlcNAc...) asparagine). FU repeat units lie at residues 961–1006, 1009–1056, 1060–1104, 1107–1152, 1156–1204, 1208–1253, 1256–1299, 1301–1346, 1348–1393, and 1396–1443; these read KKIL…RSFP, VGIC…GYFE, NRTC…DTYE, DNKC…GFYA, RLEC…SEFY, EGQC…GFFV, GSLC…GYYS, RGIC…GFYK, DFGC…QYYD, and SATC…QTLA. N-linked (GlcNAc...) asparagine glycosylation occurs at N1060. The N-linked (GlcNAc...) asparagine glycan is linked to N1181. N1274 and N1277 each carry an N-linked (GlcNAc...) asparagine glycan. N1439 is a glycosylation site (N-linked (GlcNAc...) asparagine). A helical transmembrane segment spans residues 1512 to 1532; it reads AIAVAICLLIITIFSIIFAVL. The Cytoplasmic segment spans residues 1533-1679; sequence QRNSNHVSRN…STTSRTNIRS (147 aa). The interval 1660–1679 is disordered; it reads TNAERKNHPSSTTSRTNIRS. Positions 1668–1679 are enriched in polar residues; sequence PSSTTSRTNIRS.

Belongs to the peptidase S8 family. Furin subfamily. Ca(2+) is required as a cofactor. As to expression, transient expression in a subset of central nervous system neurons during embryonic stages 12-13. Expression in developing tracheal tree from stage 13 to end of embryonic development.

It is found in the membrane. The catalysed reaction is Release of mature proteins from their proproteins by cleavage of -Arg-Xaa-Yaa-Arg-|-Zaa- bonds, where Xaa can be any amino acid and Yaa is Arg or Lys. Releases albumin, complement component C3 and von Willebrand factor from their respective precursors.. Its function is as follows. Furin is likely to represent the ubiquitous endoprotease activity within constitutive secretory pathways and capable of cleavage at the RX(K/R)R consensus motif. This is Furin-like protease 2 (Fur2) from Drosophila melanogaster (Fruit fly).